An 876-amino-acid chain; its full sequence is MVVRDQDEALRNSYKYVKLYVRQDQLEDTVDILAKQDEDKSNNDDRRSLASILDSSSSVKKKGKGSNEKYLPCVSFNTVPRSRVSSPLDEEKREFPGVQISADYTMEEYYDDESGFTSDNNADYFSGNSYSSRREGSASPGRYSSPPPASKRNIKIGKMFKISENGKIVREDYPTTPTDINDALVISRAYANWRQLWIKKKNQIDHRLEQKRDFFNYPTILFPPNKKKSSEGATPTIKFNPPIEDGFTPLTKSQKRKERVLSEKVGFPNTPRTILCHISGRKHTWVALDWALRTLIQNTDHIVVLANLPRLTKNNFEDNDSMSERKRMLMMMDDSRSVSSARRSRSRSRSRSICTRRALSLGPEESDNKLKHQNFIEWTSGYTQNEIERKLQDLFDYVTLIIPQDRSVKVTVEILIGKTKKTLLEAINIYLPDFFVSSTLRWERTDSLVRWKSNFLTDKLCTNFPIPTFIVPAKRMFDLEIDLQKEFKEPEVTKQKNTSGPKPGFSHSKSADASIPTISNIKRKQDNDYSIDSLCYAPEANGANNSSREEASDDELNAFKDDENDVMSVKSLTSNISVKEKLCTMARKRRKSMAQQLNDADHDSSIPPGQRHLKKLNIILESSLKFSLEIDSITDSIENGDVDEKRAHSMESGFEELKRVITGGAPPRHVATPQRSMLDVLDNPSSSRSKSKSRSSSKSRIRDKSKPSSPTATDINSSASASRSRSPQIKFASSVKNVDGNAALGAIKSRHSLDSPGDQQQQHHHHHHRDTDQLSVPGLPHLAPSKSYSVSSGNKDSSLRKVSSSSSLRKVKSNDSNSGKRIKKPVVTSAHLKPSSGGGGLFSFFKSKSRSPSSFRKEDESKNTPKRGGLFGFGRL.

Over residues 37–48 the composition is skewed to basic and acidic residues; the sequence is DEDKSNNDDRRS. Disordered regions lie at residues 37–67, 112–155, 226–254, and 330–353; these read DEDK…KGSN, DESG…RNIK, KKKS…TKSQ, and MMMD…SRSI. Serine 48 and serine 51 each carry phosphoserine. Residues 49–58 show a composition bias toward low complexity; that stretch reads LASILDSSSS. Positions 115–131 are enriched in polar residues; it reads GFTSDNNADYFSGNSYS. Phosphoserine is present on residues serine 360, serine 510, serine 552, and serine 577. The disordered stretch occupies residues 490–513; that stretch reads PEVTKQKNTSGPKPGFSHSKSADA. Disordered regions lie at residues 661–728 and 750–876; these read ITGG…RSPQ and RHSL…FGRL. Over residues 689–699 the composition is skewed to basic residues; the sequence is SKSKSRSSSKS. Residues 717-726 show a composition bias toward low complexity; that stretch reads SSASASRSRS. The residue at position 775 (serine 775) is a Phosphoserine. 2 stretches are compositionally biased toward low complexity: residues 794–808 and 842–854; these read NKDS…SSSL and FSFF…SPSS.

This is an uncharacterized protein from Saccharomyces cerevisiae (strain ATCC 204508 / S288c) (Baker's yeast).